A 747-amino-acid polypeptide reads, in one-letter code: Potassium transporter 20 (747 aa).

At 1-47 (MSVQEDDDAAGPEVDRLRRHDSFYGDAEKVSNDKSHGTGENWARTLQ) the chain is on the cytoplasmic side. A helical membrane pass occupies residues 48 to 68 (LAFQSIGVVYGDVGTSPLYVY). The Extracellular portion of the chain corresponds to 69–84 (SSTFPDGVKHPDDLVG). A helical transmembrane segment spans residues 85–105 (VLSLMLYTLILIPMVKYVFIV). Residues 106-171 (LYANDNGDGG…QKLESSNAAK (66 aa)) are Cytoplasmic-facing. The chain crosses the membrane as a helical span at residues 172–192 (IALFTITILGTSMVMGDGTLT). Residues 193 to 209 (PAISVLSAVSGIREKAP) are Extracellular-facing. The chain crosses the membrane as a helical span at residues 210 to 230 (SLTQLQVVWISVPILIVLFSV). At 231 to 237 (QRFGTDK) the chain is on the cytoplasmic side. A helical transmembrane segment spans residues 238 to 258 (VGYSFAPVISVWFVLIAGIGA). Over 259–288 (YNLAVHEITILRAFNPMYIIDYFRRNGKEA) the chain is Extracellular. The helical transmembrane segment at 289 to 309 (WVSLGGAVLCITGTEAMFADL) threads the bilayer. At 310 to 318 (GHFNIRAIQ) the chain is on the cytoplasmic side. Residues 319-339 (LSFTCVLFPSVALCYMGQAAY) form a helical membrane-spanning segment. The Extracellular segment spans residues 340-353 (LRKFPEDVGDTFYK). The helical transmembrane segment at 354–374 (SLPAPLFWPVFVVAIMAAIIA) threads the bilayer. The Cytoplasmic segment spans residues 375-410 (SQAMLSGAFAILSKALPLGCFPRVEVVHTSNKYEGQ). A helical transmembrane segment spans residues 411 to 431 (VYIPEVNFLIGVASVAITVAF). The Extracellular segment spans residues 432-442 (QTTANIGNAYG). Residues 443–463 (ICVVMVFSITTHLMTVVMLLI) traverse the membrane as a helical segment. Over 464–469 (WKVRLP) the chain is Cytoplasmic. Residues 470-490 (FIAAFYVVFTFTEFLYLSSIL) traverse the membrane as a helical segment. Residues 491-496 (SKFAEG) are Extracellular-facing. A helical transmembrane segment spans residues 497-517 (GYLPFCFSLVLMALMATWHYV). The Cytoplasmic portion of the chain corresponds to 518 to 747 (HVKRYWYELD…LLKVGITYEI (230 aa)).

This sequence belongs to the HAK/KUP transporter (TC 2.A.72.3) family.

It localises to the membrane. Its function is as follows. High-affinity potassium transporter. In Oryza sativa subsp. japonica (Rice), this protein is Potassium transporter 20 (HAK20).